A 432-amino-acid polypeptide reads, in one-letter code: Tryptophan--tRNA ligase (432 aa).

ATP contacts are provided by residues 13–15 (TTS) and 21–22 (GN). Residues 14-22 (TSGTPHLGN) carry the 'HIGH' region motif. L-tryptophan is bound at residue D146. ATP contacts are provided by residues 158 to 160 (GRD), L198, and 205 to 209 (KMSKS). The 'KMSKS' region signature appears at 205–209 (KMSKS).

It belongs to the class-I aminoacyl-tRNA synthetase family. In terms of assembly, homodimer.

Its subcellular location is the cytoplasm. It catalyses the reaction tRNA(Trp) + L-tryptophan + ATP = L-tryptophyl-tRNA(Trp) + AMP + diphosphate + H(+). Functionally, catalyzes the attachment of tryptophan to tRNA(Trp). This Xanthomonas axonopodis pv. citri (strain 306) protein is Tryptophan--tRNA ligase.